Reading from the N-terminus, the 381-residue chain is Phthiodiolone/phenolphthiodiolone dimycocerosates ketoreductase (381 aa).

The protein belongs to the mer family. Phthiodiolone/phenolphthiodiolone dimycocerosates ketoreductase subfamily.

Its function is as follows. Catalyzes the reduction of the keto moiety of phthiodiolone dimycocerosates (DIM B) and glycosylated phenolphthiodiolone dimycocerosates to form the intermediate compounds phthiotriol and glycosylated phenolphthiotriol dimycocerosates during phthiocerol dimycocerosates (DIM A) and glycosylated phenolphthiocerol dimycocerosates (PGL) biosynthesis. This chain is Phthiodiolone/phenolphthiodiolone dimycocerosates ketoreductase, found in Mycobacterium tuberculosis (strain CDC 1551 / Oshkosh).